The sequence spans 364 residues: Chorismate synthase (364 aa).

NADP(+) contacts are provided by Arg48 and Arg54. FMN is bound by residues 125–127 (RSS), 238–239 (NA), Gly278, 293–297 (KPTSS), and Arg319.

The protein belongs to the chorismate synthase family. Homotetramer. The cofactor is FMNH2.

The enzyme catalyses 5-O-(1-carboxyvinyl)-3-phosphoshikimate = chorismate + phosphate. Its pathway is metabolic intermediate biosynthesis; chorismate biosynthesis; chorismate from D-erythrose 4-phosphate and phosphoenolpyruvate: step 7/7. In terms of biological role, catalyzes the anti-1,4-elimination of the C-3 phosphate and the C-6 proR hydrogen from 5-enolpyruvylshikimate-3-phosphate (EPSP) to yield chorismate, which is the branch point compound that serves as the starting substrate for the three terminal pathways of aromatic amino acid biosynthesis. This reaction introduces a second double bond into the aromatic ring system. This is Chorismate synthase from Marinobacter nauticus (strain ATCC 700491 / DSM 11845 / VT8) (Marinobacter aquaeolei).